The following is a 100-amino-acid chain: Urease subunit gamma (100 aa).

It belongs to the urease gamma subunit family. Heterotrimer of UreA (gamma), UreB (beta) and UreC (alpha) subunits. Three heterotrimers associate to form the active enzyme.

It localises to the cytoplasm. It carries out the reaction urea + 2 H2O + H(+) = hydrogencarbonate + 2 NH4(+). It functions in the pathway nitrogen metabolism; urea degradation; CO(2) and NH(3) from urea (urease route): step 1/1. This is Urease subunit gamma from Leptothrix cholodnii (strain ATCC 51168 / LMG 8142 / SP-6) (Leptothrix discophora (strain SP-6)).